The chain runs to 253 residues: Acidic endochitinase pcht28 (253 aa).

Positions 1–24 (MKFNIVSPVALSCLFFLFLTGTLA) are cleaved as a signal peptide. E92 functions as the Proton donor in the catalytic mechanism. C212 and C244 form a disulfide bridge.

This sequence belongs to the glycosyl hydrolase 19 family. Chitinase class II subfamily.

Its subcellular location is the secreted. It localises to the extracellular space. It carries out the reaction Random endo-hydrolysis of N-acetyl-beta-D-glucosaminide (1-&gt;4)-beta-linkages in chitin and chitodextrins.. Functionally, defense against chitin-containing fungal pathogens. This Solanum chilense (Tomato) protein is Acidic endochitinase pcht28.